Here is a 162-residue protein sequence, read N- to C-terminus: Caveolin-2 (162 aa).

Topologically, residues 1-86 (MGLETEKADV…FEISKYVIYK (86 aa)) are cytoplasmic. Y19 bears the Phosphotyrosine; by SRC mark. Phosphoserine occurs at positions 20 and 23. A Phosphotyrosine; by SRC modification is found at Y27. Position 36 is a phosphoserine (S36). The helical intramembrane region spans 87 to 107 (FLTVFLAIPLAFTAGILFATL). At 108-162 (SCLHIWIIMPFVKTCLMVLPSVQTIWRSVTDVIIAPLCTSIGRICSSVSLQVSHD) the chain is on the cytoplasmic side.

This sequence belongs to the caveolin family. As to quaternary structure, monomer or homodimer. Interacts with CAV1; the interaction forms a stable heterooligomeric complex that is required for targeting to lipid rafts and for caveolae formation. Tyrosine phosphorylated forms do not form heterooligomers with the Tyr-19-phosphorylated form existing as a monomer or dimer, and the Tyr-27-form as a monomer only. Interacts (tyrosine phosphorylated form) with the SH2 domain-containing proteins, RASA1, NCK1 and SRC. Interacts (tyrosine phosphorylated form) with INSR, the interaction (Tyr-27-phosphorylated form) is increased on insulin stimulation. Interacts (Tyr-19 phosphorylated form) with MAPK1 (phosphorylated form); the interaction, promoted by insulin, leads to nuclear location and MAPK1 activation. Interacts with STAT3; the interaction is increased on insulin-induced tyrosine phosphorylation leading to STAT activation. In terms of processing, phosphorylated on serine and tyrosine residues. CAV1 promotes phosphorylation on Ser-23 which then targets the complex to the plasma membrane, lipid rafts and caveolae. Phosphorylation on Ser-36 appears to modulate mitosis in endothelial cells. Phosphorylation on both Tyr-19 and Tyr-27 is required for insulin-induced 'Ser-727' phosphorylation of STAT3 and its activation. Phosphorylation on Tyr-19 is required for insulin-induced phosphorylation of MAPK1 and DNA binding of STAT3. Tyrosine phosphorylation is induced by both EGF and insulin (By. similarity).

The protein resides in the nucleus. It localises to the cytoplasm. Its subcellular location is the golgi apparatus membrane. It is found in the cell membrane. The protein localises to the membrane. The protein resides in the caveola. Its function is as follows. May act as a scaffolding protein within caveolar membranes. Interacts directly with G-protein alpha subunits and can functionally regulate their activity. Acts as an accessory protein in conjunction with CAV1 in targeting to lipid rafts and driving caveolae formation. The Ser-36 phosphorylated form has a role in modulating mitosis in endothelial cells. Positive regulator of cellular mitogenesis of the MAPK signaling pathway. Required for the insulin-stimulated nuclear translocation and activation of MAPK1 and STAT3, and the subsequent regulation of cell cycle progression. In Atelerix albiventris (Middle-African hedgehog), this protein is Caveolin-2 (CAV2).